A 74-amino-acid chain; its full sequence is U3-agatoxin-Ao1g (74 aa).

An N-terminal signal peptide occupies residues 1-20 (MRAIISLLLISTMVFGVIEA). A propeptide spanning residues 21 to 34 (VSVEEGLKIFEGER) is cleaved from the precursor. Disulfide bonds link Cys-37-Cys-53, Cys-44-Cys-58, Cys-52-Cys-68, and Cys-60-Cys-66. Asparagine amide is present on Asn-72.

The protein belongs to the neurotoxin 07 (Beta/delta-agtx) family. 03 (aga-4) subfamily. Aga sub-subfamily. Expressed by the venom gland.

It localises to the secreted. In terms of biological role, insecticidal neurotoxin that modulates the insect Nav channel (DmNaV1/tipE (para/tipE)) in a unique manner, with both the activation and inactivation processes being affected. The voltage dependence of activation is shifted toward more hyperpolarized potentials (analogous to site 4 toxins) and a non-inactivating persistent sodium current is induced (site 3-like action). Interestingly, both effects take place in a voltage-dependent manner, producing a bell-shaped curve between -80 and 0 mV. This Agelena orientalis (Funnel-web spider) protein is U3-agatoxin-Ao1g.